The chain runs to 159 residues: Ascorbate-specific PTS system EIIA component (159 aa).

The 144-residue stretch at 9-152 (VLKQHHTVRL…TSLFAVIDRV (144 aa)) folds into the PTS EIIA type-2 domain. Residue H71 is the Tele-phosphohistidine intermediate of the active site. The residue at position 71 (H71) is a Phosphohistidine.

Its subcellular location is the cytoplasm. In terms of biological role, the phosphoenolpyruvate-dependent sugar phosphotransferase system (sugar PTS), a major carbohydrate active transport system, catalyzes the phosphorylation of incoming sugar substrates concomitantly with their translocation across the cell membrane. The enzyme II UlaABC PTS system is involved in ascorbate transport. This chain is Ascorbate-specific PTS system EIIA component (ulaC), found in Mycoplasma pneumoniae (strain ATCC 29342 / M129 / Subtype 1) (Mycoplasmoides pneumoniae).